Consider the following 427-residue polypeptide: Glutamate-1-semialdehyde 2,1-aminomutase (427 aa).

K264 carries the N6-(pyridoxal phosphate)lysine modification.

This sequence belongs to the class-III pyridoxal-phosphate-dependent aminotransferase family. HemL subfamily. As to quaternary structure, homodimer. Requires pyridoxal 5'-phosphate as cofactor.

The protein localises to the cytoplasm. The enzyme catalyses (S)-4-amino-5-oxopentanoate = 5-aminolevulinate. It participates in porphyrin-containing compound metabolism; protoporphyrin-IX biosynthesis; 5-aminolevulinate from L-glutamyl-tRNA(Glu): step 2/2. In Campylobacter concisus (strain 13826), this protein is Glutamate-1-semialdehyde 2,1-aminomutase.